The sequence spans 177 residues: MGYKDLPPGKNPPEDIYVVIEIPQGSGIKYELDKDTGVIFVDRFLFTAMYYPFNYGFIPQTLADDGDPVDVLVISREPVAPGSVMRCRPIGMLEMRDEEGIDTKLIAVPHEKLDPTYSDIKTVDQLPEIIRERIKHFFEHYKELEPGKWVKVENWRGLQDAIEEIKKGIENYKKGGK.

The substrate site is built by Lys29, Arg43, and Tyr55. The Mg(2+) site is built by Asp65, Asp70, and Asp102. Substrate is bound at residue Tyr141.

It belongs to the PPase family. In terms of assembly, homohexamer. The cofactor is Mg(2+).

It is found in the cytoplasm. The catalysed reaction is diphosphate + H2O = 2 phosphate + H(+). Its function is as follows. Catalyzes the hydrolysis of inorganic pyrophosphate (PPi) forming two phosphate ions. This chain is Inorganic pyrophosphatase, found in Aquifex pyrophilus.